The following is a 639-amino-acid chain: Exocyst complex component EXO70E2 (639 aa).

Belongs to the EXO70 family. As to quaternary structure, component of the exocyst complex and of the exocyst-positive organelle (EXPO). Interacts with SEC6, SEC10A and SEC10B. In terms of tissue distribution, expressed in roots, in the root-hair zone, both in root hair and nonhair cells.

The protein localises to the secreted. The protein resides in the extracellular exosome. It localises to the cell membrane. It is found in the cytoplasm. Its subcellular location is the endomembrane system. In terms of biological role, influences the subcellular localization patterns of other exocyst complex proteins (e.g. SEC5A, SEC15A, SEC15B and EXO84B) leading to their recruitment to exocyst, well-defined large punctate structures throughout the cytosol. Essential component for the formation and the recruitment of exocyst subunits to the exocyst-positive organelle (EXPO), a secreted double membrane structure also called extracellular exosome, that acts as a sequester for cytosolic proteins to release them into the apoplast. The chain is Exocyst complex component EXO70E2 from Arabidopsis thaliana (Mouse-ear cress).